Reading from the N-terminus, the 458-residue chain is tRNA modification GTPase MnmE (458 aa).

Residues Arg-22, Glu-84, and Arg-123 each contribute to the (6S)-5-formyl-5,6,7,8-tetrahydrofolate site. The 160-residue stretch at 220–379 (GIATAIIGRP…LEKAIADLFF (160 aa)) folds into the TrmE-type G domain. Asn-230 provides a ligand contact to K(+). GTP contacts are provided by residues 230–235 (NVGKSS), 249–255 (TDIAGTT), and 274–277 (DTAG). Residue Ser-234 participates in Mg(2+) binding. K(+)-binding residues include Thr-249, Ile-251, and Thr-254. Residue Thr-255 coordinates Mg(2+). Lys-458 is a (6S)-5-formyl-5,6,7,8-tetrahydrofolate binding site.

Belongs to the TRAFAC class TrmE-Era-EngA-EngB-Septin-like GTPase superfamily. TrmE GTPase family. Homodimer. Heterotetramer of two MnmE and two MnmG subunits. It depends on K(+) as a cofactor.

The protein localises to the cytoplasm. In terms of biological role, exhibits a very high intrinsic GTPase hydrolysis rate. Involved in the addition of a carboxymethylaminomethyl (cmnm) group at the wobble position (U34) of certain tRNAs, forming tRNA-cmnm(5)s(2)U34. This is tRNA modification GTPase MnmE from Bacillus thuringiensis (strain Al Hakam).